The chain runs to 274 residues: Short-chain dehydrogenase/reductase bsc3 (274 aa).

NADP(+) contacts are provided by I14, Y170, K174, I203, and T205. Y170 serves as the catalytic Proton donor. Catalysis depends on K174, which acts as the Lowers pKa of active site Tyr.

It belongs to the short-chain dehydrogenases/reductases (SDR) family.

The protein operates within mycotoxin biosynthesis. In terms of biological role, short-chain dehydrogenase/reductase; part of the gene cluster that mediates the biosynthesis of the diterpene glucoside brassicicene C. In the first step of the brassicicene C biosynthesis, the bifunctional diterpene synthase bsc8 that possesses both prenyl transferase and terpene cyclase activity, converts isopentenyl diphosphate and dimethylallyl diphosphate into geranylgeranyl diphosphate (GGDP) that is further converted into fusicocca-2,10(14)-diene, the first precursor for brassicicene C. Fusicocca-2,10(14)-diene is then substrate of cytochrome P450 monooxygenase bsc1 for hydroxylation at the C-8 position. Oxidation at C-16 position to aldehyde is then catalyzed by the cytochrome P450 monooyxygenase bsc7, yielding fusicocca-2,10(14)-diene-8-beta,16-diol. Follows the isomerization of the double bond and reduction of aldehyde to alcohol catalyzed by the short-chain dehydrogenase/reductase bsc3 to yield the diol compound fusicocca-1,10(14)-diene-8 beta,16-diol. The next step is the oxidation at the C-3 position of fusicocca-2,10(14)-diene-8-beta,16-diol catalyzed by the alpha-ketoglutarate dependent dioxygenase bsc9, to produce a triol compound. Methylation of the hydroxy group at position 16 is performed by the methyltransferase bsc6. 16-O-methylation is followed by oxidation at the C-13 position to ketone and an alkyl shift of the methyl group leads to brassicicene C. Although the probable acetyltransferase bsc4 is included in the gene cluster, no acetylation reactions are necessary for brassicicene C biosynthesis. However, the fact that brassicicene E, which is a structurally related compound having an acetoxy group at position 12, was previously isolated from another strain of A.brassicicola suggests that the ATCC 96836 strain might also produce a small amount of brassicicene E. The polypeptide is Short-chain dehydrogenase/reductase bsc3 (Alternaria brassicicola (Dark leaf spot agent)).